A 100-amino-acid polypeptide reads, in one-letter code: Urease subunit gamma (100 aa).

This sequence belongs to the urease gamma subunit family. In terms of assembly, heterotrimer of UreA (gamma), UreB (beta) and UreC (alpha) subunits. Three heterotrimers associate to form the active enzyme.

The protein resides in the cytoplasm. The catalysed reaction is urea + 2 H2O + H(+) = hydrogencarbonate + 2 NH4(+). It participates in nitrogen metabolism; urea degradation; CO(2) and NH(3) from urea (urease route): step 1/1. This chain is Urease subunit gamma, found in Prochlorococcus marinus (strain MIT 9312).